An 86-amino-acid polypeptide reads, in one-letter code: MNDFVFLVVACLLTAGTEGKKDGYPVEGDNCAFVCFGYDNAYCDKLCKDKKADSGYCYWVHILCYCYGLPDKEPTKTNGRCKPGKK.

The N-terminal stretch at 1–19 is a signal peptide; it reads MNDFVFLVVACLLTAGTEG. The region spanning 21-82 is the LCN-type CS-alpha/beta domain; it reads KDGYPVEGDN…EPTKTNGRCK (62 aa). 4 disulfide bridges follow: Cys-31-Cys-81, Cys-35-Cys-57, Cys-43-Cys-64, and Cys-47-Cys-66. Pro-83 is subject to Proline amide.

Belongs to the long (4 C-C) scorpion toxin superfamily. Sodium channel inhibitor family. Alpha subfamily. As to expression, expressed by the venom gland.

Its subcellular location is the secreted. Functionally, alpha toxins bind voltage-independently at site-3 of sodium channels (Nav) and inhibit the inactivation of the activated channels, thereby blocking neuronal transmission. In Tityus bahiensis (Brazilian scorpion), this protein is Alpha-toxin TbTx5.